The chain runs to 404 residues: Queuine tRNA-ribosyltransferase catalytic subunit (404 aa).

The active-site Proton acceptor is the D98. Residues 98 to 102, D152, Q195, and G222 each bind substrate; that span reads DSGGF. The RNA binding stretch occupies residues 253 to 259; that stretch reads GVGYAED. D272 functions as the Nucleophile in the catalytic mechanism. The tract at residues 277–281 is RNA binding; important for wobble base 34 recognition; it reads TRTAR. The Zn(2+) site is built by C310, C312, C315, and H347.

The protein belongs to the queuine tRNA-ribosyltransferase family. In terms of assembly, heterodimer of a catalytic subunit and an accessory subunit. Zn(2+) is required as a cofactor.

The protein localises to the cytoplasm. The protein resides in the nucleus. It catalyses the reaction guanosine(34) in tRNA + queuine = queuosine(34) in tRNA + guanine. Functionally, catalytic subunit of the queuine tRNA-ribosyltransferase (TGT) that catalyzes the base-exchange of a guanine (G) residue with queuine (Q) at position 34 (anticodon wobble position) in tRNAs with GU(N) anticodons (tRNA-Asp, -Asn, -His and -Tyr), resulting in the hypermodified nucleoside queuosine (7-(((4,5-cis-dihydroxy-2-cyclopenten-1-yl)amino)methyl)-7-deazaguanosine). Catalysis occurs through a double-displacement mechanism. The nucleophile active site attacks the C1' of nucleotide 34 to detach the guanine base from the RNA, forming a covalent enzyme-RNA intermediate. The proton acceptor active site deprotonates the incoming queuine, allowing a nucleophilic attack on the C1' of the ribose to form the product. The chain is Queuine tRNA-ribosyltransferase catalytic subunit from Schizosaccharomyces pombe (strain 972 / ATCC 24843) (Fission yeast).